A 609-amino-acid polypeptide reads, in one-letter code: Glutamine--fructose-6-phosphate aminotransferase [isomerizing] (609 aa).

Cysteine 2 acts as the Nucleophile; for GATase activity in catalysis. Residues cysteine 2–arginine 218 enclose the Glutamine amidotransferase type-2 domain. 2 consecutive SIS domains span residues alanine 286–leucine 426 and leucine 458–proline 599. Lysine 604 serves as the catalytic For Fru-6P isomerization activity.

As to quaternary structure, homodimer.

The protein localises to the cytoplasm. The catalysed reaction is D-fructose 6-phosphate + L-glutamine = D-glucosamine 6-phosphate + L-glutamate. Its function is as follows. Catalyzes the first step in hexosamine metabolism, converting fructose-6P into glucosamine-6P using glutamine as a nitrogen source. The protein is Glutamine--fructose-6-phosphate aminotransferase [isomerizing] of Salmonella typhimurium (strain LT2 / SGSC1412 / ATCC 700720).